The primary structure comprises 273 residues: 4-hydroxy-tetrahydrodipicolinate reductase (273 aa).

NAD(+)-binding positions include 12–17 (GAGGRM) and glutamate 38. Arginine 39 lines the NADP(+) pocket. Residues 102 to 104 (GTT) and 126 to 129 (AANF) each bind NAD(+). The active-site Proton donor/acceptor is histidine 159. Histidine 160 contributes to the (S)-2,3,4,5-tetrahydrodipicolinate binding site. Lysine 163 (proton donor) is an active-site residue. 169–170 (GT) lines the (S)-2,3,4,5-tetrahydrodipicolinate pocket.

It belongs to the DapB family. As to quaternary structure, homotetramer.

The protein localises to the cytoplasm. The enzyme catalyses (S)-2,3,4,5-tetrahydrodipicolinate + NAD(+) + H2O = (2S,4S)-4-hydroxy-2,3,4,5-tetrahydrodipicolinate + NADH + H(+). It catalyses the reaction (S)-2,3,4,5-tetrahydrodipicolinate + NADP(+) + H2O = (2S,4S)-4-hydroxy-2,3,4,5-tetrahydrodipicolinate + NADPH + H(+). It functions in the pathway amino-acid biosynthesis; L-lysine biosynthesis via DAP pathway; (S)-tetrahydrodipicolinate from L-aspartate: step 4/4. Its function is as follows. Catalyzes the conversion of 4-hydroxy-tetrahydrodipicolinate (HTPA) to tetrahydrodipicolinate. The sequence is that of 4-hydroxy-tetrahydrodipicolinate reductase from Pectobacterium carotovorum subsp. carotovorum (strain PC1).